The primary structure comprises 58 residues: MTVSYSIYLENSLHFGDALLAKLPEAYAIFDPIVDVMPVIPVFFLLLAFVWQAAVSFR.

The propeptide occupies 1–21 (MTVSYSIYLENSLHFGDALLA). The helical transmembrane segment at 29–49 (IFDPIVDVMPVIPVFFLLLAF) threads the bilayer.

The protein belongs to the PsbK family. As to quaternary structure, PSII is composed of 1 copy each of membrane proteins PsbA, PsbB, PsbC, PsbD, PsbE, PsbF, PsbH, PsbI, PsbJ, PsbK, PsbL, PsbM, PsbT, PsbX, PsbY, PsbZ, Psb30/Ycf12, at least 3 peripheral proteins of the oxygen-evolving complex and a large number of cofactors. It forms dimeric complexes.

Its subcellular location is the plastid. The protein localises to the chloroplast thylakoid membrane. One of the components of the core complex of photosystem II (PSII). PSII is a light-driven water:plastoquinone oxidoreductase that uses light energy to abstract electrons from H(2)O, generating O(2) and a proton gradient subsequently used for ATP formation. It consists of a core antenna complex that captures photons, and an electron transfer chain that converts photonic excitation into a charge separation. This chain is Photosystem II reaction center protein K, found in Adiantum capillus-veneris (Maidenhair fern).